We begin with the raw amino-acid sequence, 507 residues long: E3 ubiquitin-protein ligase makorin-3 (507 aa).

The span at 1-21 (MEEPAAPSEAHEAAGAQAGAE) shows a compositional bias: low complexity. Disordered regions lie at residues 1–48 (MEEP…DSAL) and 69–89 (RGGL…PLPS). The C3H1-type 1 zinc-finger motif lies at 95–122 (WTKQIICRYYIHGQCKEGENCRYSHDLS). Residues 126–149 (MATEGGVSPPGASAGGGPSTAAHI) are disordered. The C3H1-type 2 zinc finger occupies 238 to 265 (GSGLRFCYYASRGVCFRGESCMYLHGDI). A makorin-type Cys-His region spans residues 266–293 (CDMCGLQTLHPMDAAQREEHMRACIEAH). The segment at 311–365 (CGICMEVVYEKANPNDRRFGILSNCNHSFCIRCIRRWRSARQFENRIVKSCPQCR) adopts an RING-type zinc-finger fold. The C3H1-type 3 zinc finger occupies 394-423 (AMSNKACRYFAEGRGNCPFGDTCFYKHEYP).

As to expression, ubiquitous.

The protein resides in the nucleus. It catalyses the reaction S-ubiquitinyl-[E2 ubiquitin-conjugating enzyme]-L-cysteine + [acceptor protein]-L-lysine = [E2 ubiquitin-conjugating enzyme]-L-cysteine + N(6)-ubiquitinyl-[acceptor protein]-L-lysine.. The protein operates within protein modification; protein ubiquitination. Functionally, E3 ubiquitin ligase catalyzing the covalent attachment of ubiquitin moieties onto substrate proteins. Acts as a key developmental timer that helps ensure puberty begins at the appropriate age, by inhibiting premature activation of the reproductive hormone cascade. Epigenetically regulates GNRH1 transcription by disrupting the binding of methyl-DNA binding protein 3/MBD3 to the promoter of GNRH1. Mechanistically, mediates the non-proteolytic ubiquitination of MBD3 at multiple sites with 'Lys27' ubiquitin linkages and thereby regulates the methylation status of the genome, including GNRH1 promoter. Modulates the stability and translation of GNRH1 mRNA by mediating the non-proteolytic ubiquitination of PABP family members PABPC1, PABPC3 and PABPC4 at multiple sites. Also participates in the maintenance of genomic and epigenomic stability by regulating the abundance of APEX2 via 'Lys-48'-linked ubiquitination. This Homo sapiens (Human) protein is E3 ubiquitin-protein ligase makorin-3 (MKRN3).